We begin with the raw amino-acid sequence, 214 residues long: Redox-sensing transcriptional repressor Rex (214 aa).

Residues 17–56 (LYYRIFKRFYADQVEKASSKQIADAMGIDSATVRRDFSYF) constitute a DNA-binding region (H-T-H motif). Residue 91–96 (GCGNIG) coordinates NAD(+).

The protein belongs to the transcriptional regulatory Rex family. Homodimer.

It localises to the cytoplasm. Functionally, modulates transcription in response to changes in cellular NADH/NAD(+) redox state. This chain is Redox-sensing transcriptional repressor Rex, found in Streptococcus equi subsp. zooepidemicus (strain H70).